A 1479-amino-acid chain; its full sequence is Chromosome partition protein MukB (1479 aa).

Glycine 34 to serine 41 contacts ATP. Coiled-coil stretches lie at residues glutamate 138–valine 163 and glutamine 331–glutamine 664. The flexible hinge stretch occupies residues proline 665–arginine 782. Coiled-coil stretches lie at residues aspartate 831–alanine 1112 and valine 1206–glutamine 1257.

It belongs to the SMC family. MukB subfamily. In terms of assembly, homodimerization via its hinge domain. Binds to DNA via its C-terminal region. Interacts, and probably forms a ternary complex, with MukE and MukF via its C-terminal region. The complex formation is stimulated by calcium or magnesium. Interacts with tubulin-related protein FtsZ.

The protein resides in the cytoplasm. Its subcellular location is the nucleoid. In terms of biological role, plays a central role in chromosome condensation, segregation and cell cycle progression. Functions as a homodimer, which is essential for chromosome partition. Involved in negative DNA supercoiling in vivo, and by this means organize and compact chromosomes. May achieve or facilitate chromosome segregation by condensation DNA from both sides of a centrally located replisome during cell division. The protein is Chromosome partition protein MukB of Klebsiella pneumoniae.